The sequence spans 85 residues: Large ribosomal subunit protein bL27 (85 aa).

Residues 1–21 are disordered; it reads MAHKKAGGSSRNGRDSEGRRL.

Belongs to the bacterial ribosomal protein bL27 family.

This chain is Large ribosomal subunit protein bL27, found in Rhodospirillum rubrum (strain ATCC 11170 / ATH 1.1.1 / DSM 467 / LMG 4362 / NCIMB 8255 / S1).